We begin with the raw amino-acid sequence, 156 residues long: Transcription elongation factor GreA (156 aa).

A coiled-coil region spans residues 8–75 (LTKEGYEKLK…ELENMLSKAE (68 aa)).

Belongs to the GreA/GreB family.

In terms of biological role, necessary for efficient RNA polymerase transcription elongation past template-encoded arresting sites. The arresting sites in DNA have the property of trapping a certain fraction of elongating RNA polymerases that pass through, resulting in locked ternary complexes. Cleavage of the nascent transcript by cleavage factors such as GreA or GreB allows the resumption of elongation from the new 3'terminus. GreA releases sequences of 2 to 3 nucleotides. The polypeptide is Transcription elongation factor GreA (Thermosipho melanesiensis (strain DSM 12029 / CIP 104789 / BI429)).